A 357-amino-acid polypeptide reads, in one-letter code: Glycerol-1-phosphate dehydrogenase [NAD(P)+] (357 aa).

NAD(+)-binding positions include 104 to 108 and 126 to 129; these read GKTID and TAAS. Substrate is bound at residue Asp-131. An NAD(+)-binding site is contributed by Ser-135. Asp-178 contributes to the substrate binding site. 2 residues coordinate Zn(2+): Asp-178 and His-258. His-262 is a substrate binding site. Residue His-274 participates in Zn(2+) binding.

The protein belongs to the glycerol-1-phosphate dehydrogenase family. It depends on Zn(2+) as a cofactor.

Its subcellular location is the cytoplasm. The enzyme catalyses sn-glycerol 1-phosphate + NAD(+) = dihydroxyacetone phosphate + NADH + H(+). The catalysed reaction is sn-glycerol 1-phosphate + NADP(+) = dihydroxyacetone phosphate + NADPH + H(+). Its pathway is membrane lipid metabolism; glycerophospholipid metabolism. Functionally, catalyzes the NAD(P)H-dependent reduction of dihydroxyacetonephosphate (DHAP or glycerone phosphate) to glycerol 1-phosphate (G1P). The G1P thus generated is used as the glycerophosphate backbone of phospholipids in the cellular membranes of Archaea. This is Glycerol-1-phosphate dehydrogenase [NAD(P)+] from Methanococcoides burtonii (strain DSM 6242 / NBRC 107633 / OCM 468 / ACE-M).